Here is a 340-residue protein sequence, read N- to C-terminus: Uroporphyrinogen decarboxylase (340 aa).

Substrate-binding positions include 21–25 (RQAGR), Phe40, Asp71, Tyr147, Ser202, and His316.

It belongs to the uroporphyrinogen decarboxylase family. Homodimer.

The protein localises to the cytoplasm. It carries out the reaction uroporphyrinogen III + 4 H(+) = coproporphyrinogen III + 4 CO2. The protein operates within porphyrin-containing compound metabolism; protoporphyrin-IX biosynthesis; coproporphyrinogen-III from 5-aminolevulinate: step 4/4. Functionally, catalyzes the decarboxylation of four acetate groups of uroporphyrinogen-III to yield coproporphyrinogen-III. In Wolinella succinogenes (strain ATCC 29543 / DSM 1740 / CCUG 13145 / JCM 31913 / LMG 7466 / NCTC 11488 / FDC 602W) (Vibrio succinogenes), this protein is Uroporphyrinogen decarboxylase.